Reading from the N-terminus, the 3184-residue chain is WD repeat- and FYVE domain-containing protein 4 (3184 aa).

The span at 1-18 shows a compositional bias: basic and acidic residues; that stretch reads MEAEDLSKAEDRNEDPGS. 4 disordered regions span residues 1 to 39, 944 to 993, 1837 to 1869, and 2309 to 2335; these read MEAEDLSKAEDRNEDPGSKNEGQLAAVQPDVPHGGQSSS, SHTH…QDST, VGAESTRNTSSPEAAAEGDSTVEGLQAPTKAHP, and ALSSGRHKESQDKNDHISQTNAENQDE. The span at 981 to 993 shows a compositional bias: polar residues; it reads QAPQPLGESQDST. The segment covering 2314-2324 has biased composition (basic and acidic residues); that stretch reads RHKESQDKNDH. The region spanning 2385–2510 is the BEACH-type PH domain; sequence LDKEKVTQKF…DRSKAFKSFC (126 aa). The BEACH domain maps to 2527–2821; the sequence is SLRRYPGSDR…QLFTKPHPAR (295 aa). 6 WD repeats span residues 2863–2922, 2923–2972, 2973–3014, 3015–3057, 3058–3141, and 3142–3184; these read MYLF…YGSD, KVLM…PRGL, RLRQ…LDHL, THVT…GQPL, ASIT…ELDV, and SIAL…SADG. Residues 3107–3128 are disordered; that stretch reads SVPGRPAGEEPPAQPPSPRGHK.

In terms of assembly, interacts with HSP90AB1.

It is found in the early endosome. The protein resides in the endoplasmic reticulum. Its function is as follows. Plays a critical role in the regulation of cDC1-mediated cross-presentation of viral and tumor antigens in dendritic cells. Mechanistically, acts near the plasma membrane and interacts with endosomal membranes to promote endosomal-to-cytosol antigen trafficking. Also plays a role in B-cell survival through regulation of autophagy. This is WD repeat- and FYVE domain-containing protein 4 (WDFY4) from Homo sapiens (Human).